Consider the following 289-residue polypeptide: Trimeric intracellular cation channel type B (289 aa).

The Lumenal portion of the chain corresponds to 1–18 (MDVFAFFNLNELAFGLSK). A helical membrane pass occupies residues 19–36 (LPMFPYFDMAHYIISVMS). The Cytoplasmic portion of the chain corresponds to 37 to 49 (LREQPGALCVSQR). Residues 50 to 73 (SPLACWFSSMLYCFGGAVLSALML) traverse the membrane as a helical segment. The Lumenal portion of the chain corresponds to 74–85 (ADAPVAPLSNTT). A helical transmembrane segment spans residues 86–103 (NLLLATLMWYLVFYCPLD). Topologically, residues 104–107 (VVYS) are cytoplasmic. The helical transmembrane segment at 108-125 (LASLLPLRLVLTAMKEVT) threads the bilayer. Lys122 and Arg126 together coordinate a 1,2-diacyl-sn-glycero-3-phospho-(1D-myo-inositol-4,5-bisphosphate). The Lumenal portion of the chain corresponds to 126–144 (RTWKVLSGVSQAGSKYSDA). A helical transmembrane segment spans residues 145-162 (LFVMVAVGWAKGAGGGLI). Topologically, residues 163 to 183 (SNFEQLVRGVWKPETNELLKM) are cytoplasmic. The chain crosses the membrane as a helical span at residues 184 to 201 (SYPTKVTLLGAVVFSLQQ). Residues 202-210 (CRYLPIQTH) lie on the Lumenal side of the membrane. A helical membrane pass occupies residues 211–230 (HLTFIYTLFTVTNKTRMMLL). Over 231 to 289 (GSSSHPLSSLESFLYKTLFVRPLTDLSAEHTHSKHNGSVPEPTTAQTHTKEAEASKKTN) the chain is Cytoplasmic. The segment at 260-289 (HTHSKHNGSVPEPTTAQTHTKEAEASKKTN) is disordered. The segment covering 278–289 (HTKEAEASKKTN) has biased composition (basic and acidic residues).

It belongs to the TMEM38 family. In terms of assembly, homotrimer; conformation seems to be controled by binding to diacylglycerol (DAG).

The protein resides in the endoplasmic reticulum membrane. It catalyses the reaction K(+)(in) = K(+)(out). Its activity is regulated as follows. Channel activity is activated by increased cytosolic Ca(2+) levels and blocked by luminal high Ca(2+) levels. Its function is as follows. Intracellular monovalent cation channel required for maintenance of rapid intracellular calcium release. Acts as a potassium counter-ion channel that functions in synchronization with calcium release from intracellular stores. Activated by increased cytosolic Ca(2+) levels. The polypeptide is Trimeric intracellular cation channel type B (tmem38b) (Danio rerio (Zebrafish)).